Here is a 304-residue protein sequence, read N- to C-terminus: E3 ubiquitin-protein ligase BOI (304 aa).

The WRD domain stretch occupies residues 178-214 (LQERVKSLYVENQIWRDIAQTNEANANTLRTNLDQVL). Positions 197 to 220 (QTNEANANTLRTNLDQVLAQLETF) form a coiled coil. An RING-type zinc finger spans residues 254–291 (CKRCGEREASVLVLPCRHLCLCTVCGGSALLRTCPVCD).

In terms of assembly, interacts with MYB108/BOS1 and the DELLA proteins GAI, RGA, RGL1, RGL2 and RGL3. As to expression, expressed in leaves, siliques, roots, flowering tissues and stigma tips.

It is found in the nucleus. It carries out the reaction S-ubiquitinyl-[E2 ubiquitin-conjugating enzyme]-L-cysteine + [acceptor protein]-L-lysine = [E2 ubiquitin-conjugating enzyme]-L-cysteine + N(6)-ubiquitinyl-[acceptor protein]-L-lysine.. Its pathway is protein degradation; proteasomal ubiquitin-dependent pathway. Functionally, E3 ubiquitin-protein ligase involved in the regulation of pathogen and abiotic stress responses by facilitating degradation of MYB108/BOI. Attenuates cell death by preventing caspase activation. Has no effect on the stability of the DELLA proteins. Not regulated by MYB108/BOI. The polypeptide is E3 ubiquitin-protein ligase BOI (BOI) (Arabidopsis thaliana (Mouse-ear cress)).